Here is a 309-residue protein sequence, read N- to C-terminus: UDP-3-O-acyl-N-acetylglucosamine deacetylase (309 aa).

Zn(2+) is bound by residues histidine 78, histidine 235, and aspartate 239. Catalysis depends on histidine 262, which acts as the Proton donor.

This sequence belongs to the LpxC family. Requires Zn(2+) as cofactor.

The catalysed reaction is a UDP-3-O-[(3R)-3-hydroxyacyl]-N-acetyl-alpha-D-glucosamine + H2O = a UDP-3-O-[(3R)-3-hydroxyacyl]-alpha-D-glucosamine + acetate. The protein operates within glycolipid biosynthesis; lipid IV(A) biosynthesis; lipid IV(A) from (3R)-3-hydroxytetradecanoyl-[acyl-carrier-protein] and UDP-N-acetyl-alpha-D-glucosamine: step 2/6. Its function is as follows. Catalyzes the hydrolysis of UDP-3-O-myristoyl-N-acetylglucosamine to form UDP-3-O-myristoylglucosamine and acetate, the committed step in lipid A biosynthesis. The chain is UDP-3-O-acyl-N-acetylglucosamine deacetylase from Syntrophotalea carbinolica (strain DSM 2380 / NBRC 103641 / GraBd1) (Pelobacter carbinolicus).